The following is a 342-amino-acid chain: AA9 family lytic polysaccharide monooxygenase H (342 aa).

The signal sequence occupies residues 1–19; sequence MSKASALLAGLTGAALVAA. Positions 20 and 106 each coordinate Cu(2+). Cystine bridges form between Cys75/Cys195 and Cys117/Cys121. The O2 site is built by His181 and Gln190. Tyr192 contacts Cu(2+). The segment at 263-308 is disordered; sequence ATVPGGGGANPTATTTAATSAAPSTTLRTTTTSAAQTTAPPSGDVQ. Residues 272 to 305 show a composition bias toward low complexity; sequence NPTATTTAATSAAPSTTLRTTTTSAAQTTAPPSG. One can recognise a CBM1 domain in the interval 306-342; that stretch reads DVQTKYGQCGGNGWTGPTVCAPGSSCSVLNEWYSQCL.

The protein belongs to the polysaccharide monooxygenase AA9 family. It depends on Cu(2+) as a cofactor.

The protein resides in the secreted. It catalyses the reaction [(1-&gt;4)-beta-D-glucosyl]n+m + reduced acceptor + O2 = 4-dehydro-beta-D-glucosyl-[(1-&gt;4)-beta-D-glucosyl]n-1 + [(1-&gt;4)-beta-D-glucosyl]m + acceptor + H2O.. The presence of lignin presents a significant source of antioxidants, which probably increase the activity by trapping liberated oxidized fragments. Lytic polysaccharide monooxygenase (LPMO) that depolymerizes crystalline and amorphous polysaccharides via the oxidation of scissile alpha- or beta-(1-4)-glycosidic bonds, yielding C1 or C4 oxidation products. Catalysis by LPMOs requires the reduction of the active-site copper from Cu(II) to Cu(I) by a reducing agent and H(2)O(2) or O(2) as a cosubstrate. Hydrolyzes weakly barley beta-glucan, carboxymethyl cellulose, lichenan, wheat arabinoxylan and birchwood xylan. Stimulates the hydrolysis of lignocellulosic substrates (such as hydrothermal pretreated wheat straw or steam-pretreated spruce), when combined with other cellulolytic enzymes. The protein is AA9 family lytic polysaccharide monooxygenase H of Thermothelomyces thermophilus (strain ATCC 42464 / BCRC 31852 / DSM 1799) (Sporotrichum thermophile).